Reading from the N-terminus, the 752-residue chain is Catalase-peroxidase (752 aa).

A disordered region spans residues 1-20; that stretch reads MENELVSKVKAPVPGNQTNT. Residues 111 to 234 constitute a cross-link (tryptophyl-tyrosyl-methioninium (Trp-Tyr) (with M-260)); that stretch reads WHSAGTYRIG…LGAVQMGLIY (124 aa). The Proton acceptor role is filled by H112. Residues 234–260 constitute a cross-link (tryptophyl-tyrosyl-methioninium (Tyr-Met) (with W-111)); it reads YVNPEGPNGKPDPAAAAVDIRETFARM. Heme b is bound at residue H275.

This sequence belongs to the peroxidase family. Peroxidase/catalase subfamily. As to quaternary structure, homodimer or homotetramer. The cofactor is heme b. Post-translationally, formation of the three residue Trp-Tyr-Met cross-link is important for the catalase, but not the peroxidase activity of the enzyme.

The enzyme catalyses H2O2 + AH2 = A + 2 H2O. It carries out the reaction 2 H2O2 = O2 + 2 H2O. In terms of biological role, bifunctional enzyme with both catalase and broad-spectrum peroxidase activity. In Koribacter versatilis (strain Ellin345), this protein is Catalase-peroxidase.